The primary structure comprises 484 residues: MHQFTIAELVKGLRNKDFSSTEITQHYLDRIARLDNTYNSYITVTGDVALQQAAAADKRLAAGNTSALCGVPIAHKDIFCTAGVRTSCASKMLDKFIAPYNATIVENYLKAGVVMLGKTNMDEFAMGSSNETSWYGPVKNPWNTHCVPGGSSGGSAAAVAAHLAPAATASDTGGSIRQPAALCGLTGIKPTYGRVSRWGMIAFASSLDQAGILSRTAEDAALLLNDMASYDPKDSTCIERDVPDYTADLNKPLNGLRIGVPKEYFGEGLNPKTAALVEAAIKVYESLGASIHSVSLPHTHLAVPAYYVIAPAECSANLSRFDGVRYGHRCEDPKDLMDLYMRSRSEGFGAEVKRRILVGTYALSAGYYDAYYSKAQKVRRLIKQDFVDAFHHVDVILGPTSPSPAFEFGSKGKDPVAMYLEDIYTIATNLAGLPGLSIPCGLVDDKPVGLQLIGNFFAEAQLLNAAHQFQQATDFHQQTAPGIE.

Active-site charge relay system residues include Lys-76 and Ser-151. Ser-175 functions as the Acyl-ester intermediate in the catalytic mechanism.

It belongs to the amidase family. GatA subfamily. In terms of assembly, heterotrimer of A, B and C subunits.

The catalysed reaction is L-glutamyl-tRNA(Gln) + L-glutamine + ATP + H2O = L-glutaminyl-tRNA(Gln) + L-glutamate + ADP + phosphate + H(+). In terms of biological role, allows the formation of correctly charged Gln-tRNA(Gln) through the transamidation of misacylated Glu-tRNA(Gln) in organisms which lack glutaminyl-tRNA synthetase. The reaction takes place in the presence of glutamine and ATP through an activated gamma-phospho-Glu-tRNA(Gln). The sequence is that of Glutamyl-tRNA(Gln) amidotransferase subunit A from Cellvibrio japonicus (strain Ueda107) (Pseudomonas fluorescens subsp. cellulosa).